Reading from the N-terminus, the 257-residue chain is THAP domain-containing protein 11 (257 aa).

The THAP-type zinc finger occupies 6 to 64 (CCVPGCYNNSHRDRDLRFYTFPKDPTQREIWLKNISRAGVSGCFSTFQPTTGHRVCSVH). Positions 196-251 (ELLRKLNEQRDIIALMEIKMKEMKNTIRQLRVTEARLQDELRQREQERERLICANT) form a coiled coil.

The protein belongs to the THAP11 family.

Its subcellular location is the nucleus. The protein localises to the cytoplasm. Functionally, transcription factor, which has both transcriptional activation and repression activities. Binds numerous promoters of genes and therefore can be involved in many processes. Also modulates chromatin accessibility. Required for normal brain development and neural precursor differentiation. The chain is THAP domain-containing protein 11 (thap11) from Danio rerio (Zebrafish).